A 335-amino-acid chain; its full sequence is Beta-ketoacyl-[acyl-carrier-protein] synthase III (335 aa).

Catalysis depends on residues C119 and H261. Positions 262 to 266 (QANQR) are ACP-binding. The active site involves N291.

It belongs to the thiolase-like superfamily. FabH family. In terms of assembly, homodimer.

Its subcellular location is the cytoplasm. It carries out the reaction malonyl-[ACP] + acetyl-CoA + H(+) = 3-oxobutanoyl-[ACP] + CO2 + CoA. It participates in lipid metabolism; fatty acid biosynthesis. Catalyzes the condensation reaction of fatty acid synthesis by the addition to an acyl acceptor of two carbons from malonyl-ACP. Catalyzes the first condensation reaction which initiates fatty acid synthesis and may therefore play a role in governing the total rate of fatty acid production. Possesses both acetoacetyl-ACP synthase and acetyl transacylase activities. Its substrate specificity determines the biosynthesis of branched-chain and/or straight-chain of fatty acids. The chain is Beta-ketoacyl-[acyl-carrier-protein] synthase III from Prochlorococcus marinus (strain MIT 9301).